The following is a 270-amino-acid chain: MATVPEPTSEMMSYYYSDNENDLFFEADGPRKMKCCFQDLNNSSLEDEGIQLHISHQLHNKSLKHFVSVVVALEKLKKVSLPCSQPLQDDDLKNIFCCIFEEEPIVCEVYDDDAFVCDAPLQSLDCKFRDISQKSLVLYNSCELRALHLNGSSVNQQAVFRMSFVQGDENSNKIPVALCIKEKNLYLSCVMKDGKPTLQLEMLDPRVYPKKKMEKRFVFNKTEIKETLEFESSQFPNWYISTSKAEAMPVFLGNTKGGQDITDFTMELSS.

Residues 1 to 118 constitute a propeptide that is removed on maturation; the sequence is MATVPEPTSE…VYDDDAFVCD (118 aa).

The protein belongs to the IL-1 family. As to quaternary structure, monomer. In its precursor form, weakly interacts with full-length MEFV; the mature cytokine does not interact at all. Interacts with integrins ITGAV:ITGBV and ITGA5:ITGB1; integrin-binding is required for IL1B signaling. Interacts with cargo receptor TMED10; the interaction is direct and is required for the secretion of IL1B mature form. Interacts with HSP90AB1; the interaction facilitates cargo translocation into the ERGIC. Interacts with HSP90B1; the interaction facilitates cargo translocation into the ERGIC.

The protein localises to the cytoplasm. It localises to the cytosol. Its subcellular location is the secreted. It is found in the lysosome. The protein resides in the extracellular exosome. Potent pro-inflammatory cytokine. Initially discovered as the major endogenous pyrogen, induces prostaglandin synthesis, neutrophil influx and activation, T-cell activation and cytokine production, B-cell activation and antibody production, and fibroblast proliferation and collagen production. Promotes Th17 differentiation of T-cells. Synergizes with IL12/interleukin-12 to induce IFNG synthesis from T-helper 1 (Th1) cells. Plays a role in angiogenesis by inducing VEGF production synergistically with TNF and IL6. Involved in transduction of inflammation downstream of pyroptosis: its mature form is specifically released in the extracellular milieu by passing through the gasdermin-D (GSDMD) pore. This chain is Interleukin-1 beta (IL1B), found in Eumetopias jubatus (Steller sea lion).